The chain runs to 166 residues: Co-chaperone protein HscB homolog (166 aa).

Residues 3–75 (QYFTLFRIEP…IDRAAYLLKT (73 aa)) form the J domain.

Belongs to the HscB family. As to quaternary structure, interacts with HscA and stimulates its ATPase activity.

Co-chaperone involved in the maturation of iron-sulfur cluster-containing proteins. Seems to help targeting proteins to be folded toward HscA. In Neisseria gonorrhoeae (strain NCCP11945), this protein is Co-chaperone protein HscB homolog.